Consider the following 273-residue polypeptide: Shikimate dehydrogenase (NADP(+)) (273 aa).

Shikimate-binding positions include 14-16 (SKS) and Thr61. Lys65 (proton acceptor) is an active-site residue. An NADP(+)-binding site is contributed by Glu77. Residues Asn86 and Asp102 each coordinate shikimate. Residues 126 to 130 (GAGGA), 150 to 155 (NRTYEK), and Met213 contribute to the NADP(+) site. Tyr215 is a shikimate binding site. Gly237 provides a ligand contact to NADP(+).

Belongs to the shikimate dehydrogenase family. In terms of assembly, homodimer.

It carries out the reaction shikimate + NADP(+) = 3-dehydroshikimate + NADPH + H(+). Its pathway is metabolic intermediate biosynthesis; chorismate biosynthesis; chorismate from D-erythrose 4-phosphate and phosphoenolpyruvate: step 4/7. Functionally, involved in the biosynthesis of the chorismate, which leads to the biosynthesis of aromatic amino acids. Catalyzes the reversible NADPH linked reduction of 3-dehydroshikimate (DHSA) to yield shikimate (SA). The sequence is that of Shikimate dehydrogenase (NADP(+)) from Aliivibrio fischeri (strain MJ11) (Vibrio fischeri).